The primary structure comprises 270 residues: 4-hydroxy-4-methyl-2-oxoglutarate aldolase tasA (270 aa).

The Proton acceptor role is filled by histidine 49. Residues glutamate 156 and aspartate 182 each contribute to the a divalent metal cation site. Aspartate 182 provides a ligand contact to substrate.

The protein belongs to the HpcH/HpaI aldolase family. Homohexamer; trimer of dimers. Requires Co(2+) as cofactor. Mn(2+) is required as a cofactor. The cofactor is Zn(2+). Fe(2+) serves as cofactor. It depends on Mg(2+) as a cofactor.

It carries out the reaction 4-hydroxy-4-methyl-2-oxoglutarate = 2 pyruvate. It participates in secondary metabolite biosynthesis. Functionally, 4-hydroxy-4-methyl-2-oxoglutarate aldolase; part of the gene cluster that mediates the biosynthesis of the tetramic acids Sch210971 and Sch210972, potential anti-HIV fungal natural product that contain a decalin core. The PKS module of tasS together with the enoylreductase tasC catalyze the formation of the polyketide unit which is then conjugated to 4-hydroxyl-4-methyl glutamate (HMG) by the condensation domain of the tasS NRPS module. One unique structural feature of Sch210971 and Sch210972 is the tetramic acid motif proposed to be derived from the non-proteinogenic amino acid HMG, by a Dieckmann-type condensation catalyzed by the reductase domain of tasS. The aldolase tasA catalyzes the aldol condensation of 2 molecules of pyruvic acid to yield the intermediate 4-hydroxyl-4-methyl-2-oxoglutarate (HMOG), which can then be stereoselectively transaminated, may be by tasG, to form HMG. The Diels-Alderase tas3 then uses the Dieckmann product of tasS as substrate and catalyzes the Diels-Alder cycloaddition to form the decalin ring of Sch210971 and Sch210972. The chain is 4-hydroxy-4-methyl-2-oxoglutarate aldolase tasA from Hapsidospora irregularis.